A 1334-amino-acid polypeptide reads, in one-letter code: Aldehyde oxidase 3 (1334 aa).

The 2Fe-2S ferredoxin-type domain occupies 8 to 95 (DELIFFVNGK…GAAVTTVEGI (88 aa)). 4 residues coordinate [2Fe-2S] cluster: C47, C52, C55, and C77. Position 116 (Q116) interacts with Mo-molybdopterin. The [2Fe-2S] cluster site is built by C117, C120, C152, and C154. Residues 236 to 421 (FRGERTTWIA…ISVFVPLSRK (186 aa)) form the FAD-binding PCMH-type domain. 264–271 (LVIGNTCL) is a binding site for FAD. S320 is modified (phosphoserine). The FAD site is built by S354, H358, D367, and L411. Mo-molybdopterin contacts are provided by G801, L1042, and Q1198. The Proton acceptor; for azaheterocycle hydroxylase activity role is filled by E1265.

The protein belongs to the xanthine dehydrogenase family. Homodimer. [2Fe-2S] cluster serves as cofactor. It depends on FAD as a cofactor. The cofactor is Mo-molybdopterin.

The protein localises to the cytoplasm. It catalyses the reaction an aldehyde + O2 + H2O = a carboxylate + H2O2 + H(+). Functionally, oxidase with broad substrate specificity, oxidizing aromatic azaheterocycles, such as N1-methylnicotinamide and phthalazine, as well as aldehydes, such as benzaldehyde, retinal and pyridoxal. Plays a key role in the metabolism of xenobiotics and drugs containing aromatic azaheterocyclic substituents. Is probably involved in the regulation of reactive oxygen species homeostasis. Is a prominent source of superoxide generation via the one-electron reduction of molecular oxygen. Also catalyzes nitric oxide (NO) production; under anaerobic conditions, reduces nitrite to NO with NADH or aldehyde as electron donor, but under aerobic conditions, NADH is the preferred substrate. These reactions may be catalyzed by several isozymes. The polypeptide is Aldehyde oxidase 3 (Aox3) (Rattus norvegicus (Rat)).